Here is a 283-residue protein sequence, read N- to C-terminus: ATP phosphoribosyltransferase (283 aa).

Belongs to the ATP phosphoribosyltransferase family. Long subfamily. Mg(2+) is required as a cofactor.

The protein localises to the cytoplasm. It catalyses the reaction 1-(5-phospho-beta-D-ribosyl)-ATP + diphosphate = 5-phospho-alpha-D-ribose 1-diphosphate + ATP. It participates in amino-acid biosynthesis; L-histidine biosynthesis; L-histidine from 5-phospho-alpha-D-ribose 1-diphosphate: step 1/9. Feedback inhibited by histidine. Its function is as follows. Catalyzes the condensation of ATP and 5-phosphoribose 1-diphosphate to form N'-(5'-phosphoribosyl)-ATP (PR-ATP). Has a crucial role in the pathway because the rate of histidine biosynthesis seems to be controlled primarily by regulation of HisG enzymatic activity. The sequence is that of ATP phosphoribosyltransferase from Rhodococcus erythropolis (strain PR4 / NBRC 100887).